The following is a 181-amino-acid chain: Bradykinin-potentiating and C-type natriuretic peptides (181 aa).

The signal sequence occupies residues 1–23 (MFVSRLAASGLLLLALLAVSLDG). A propeptide spanning residues 24 to 30 (KPLQQWS) is cleaved from the precursor. Gln31 carries the post-translational modification Pyrrolidone carboxylic acid. Residues 41-43 (LVV) constitute a propeptide that is removed on maturation. Pyrrolidone carboxylic acid is present on Gln44. 2 consecutive propeptides follow at residues 50–78 (TQLQ…AALD) and 90–157 (GSKA…KGLA). Positions 74 to 153 (EAALDTPPAG…GGGGGGARRL (80 aa)) are disordered. The span at 104–114 (SKGASATSAAS) shows a compositional bias: low complexity. Gly residues predominate over residues 140–150 (AGGGGGGGGGA). Cys165 and Cys181 are oxidised to a cystine.

The protein in the N-terminal section; belongs to the bradykinin-potentiating peptide family. This sequence in the C-terminal section; belongs to the natriuretic peptide family. As to expression, venom gland.

The protein resides in the secreted. Functionally, bradykinin-potentiating peptide both inhibits the activity of the angiotensin-converting enzyme (ACE) and enhances the action of bradykinin by inhibiting the peptidases that inactivate it. It acts as an indirect hypotensive agent. Its function is as follows. antagonizes the vasodilatory actions of bradykinin at the B2 bradykinin receptor. Has no demonstrable hypotensive activity when injected intravenously in rats. Has a vasorelaxant activity in rat aortic strips and a diuretic potency in anesthetized rats. May act by activating natriuretic receptors (NPR1 and/or NPR2). In Crotalus durissus collilineatus (Brazilian rattlesnake), this protein is Bradykinin-potentiating and C-type natriuretic peptides.